The sequence spans 504 residues: Ribose import ATP-binding protein RbsA (504 aa).

2 ABC transporter domains span residues 6-242 (LELN…VGRR) and 250-495 (IDVQ…VGKT). 38-45 (GENGAGKS) contacts ATP.

The protein belongs to the ABC transporter superfamily. Ribose importer (TC 3.A.1.2.1) family. The complex is composed of an ATP-binding protein (RbsA), two transmembrane proteins (RbsC) and a solute-binding protein (RbsB).

It is found in the cell inner membrane. The enzyme catalyses D-ribose(out) + ATP + H2O = D-ribose(in) + ADP + phosphate + H(+). Its function is as follows. Part of the ABC transporter complex RbsABC involved in ribose import. Responsible for energy coupling to the transport system. The sequence is that of Ribose import ATP-binding protein RbsA from Aliivibrio fischeri (strain ATCC 700601 / ES114) (Vibrio fischeri).